Here is a 575-residue protein sequence, read N- to C-terminus: Proline--tRNA ligase (575 aa).

The protein belongs to the class-II aminoacyl-tRNA synthetase family. ProS type 1 subfamily. In terms of assembly, homodimer.

The protein localises to the cytoplasm. The enzyme catalyses tRNA(Pro) + L-proline + ATP = L-prolyl-tRNA(Pro) + AMP + diphosphate. Catalyzes the attachment of proline to tRNA(Pro) in a two-step reaction: proline is first activated by ATP to form Pro-AMP and then transferred to the acceptor end of tRNA(Pro). As ProRS can inadvertently accommodate and process non-cognate amino acids such as alanine and cysteine, to avoid such errors it has two additional distinct editing activities against alanine. One activity is designated as 'pretransfer' editing and involves the tRNA(Pro)-independent hydrolysis of activated Ala-AMP. The other activity is designated 'posttransfer' editing and involves deacylation of mischarged Ala-tRNA(Pro). The misacylated Cys-tRNA(Pro) is not edited by ProRS. The sequence is that of Proline--tRNA ligase from Pseudothermotoga lettingae (strain ATCC BAA-301 / DSM 14385 / NBRC 107922 / TMO) (Thermotoga lettingae).